Reading from the N-terminus, the 690-residue chain is Ras guanyl-releasing protein 3 (690 aa).

Residues 3-125 (SSGLGKAATL…SLIDISSIPS (123 aa)) form the N-terminal Ras-GEF domain. The 232-residue stretch at 152 to 383 (EPIELAEHLT…YKLSLVLEPR (232 aa)) folds into the Ras-GEF domain. 2 consecutive EF-hand domains span residues 420 to 455 (HIRK…FPFL) and 458 to 484 (FCVL…AKSQ). Asp433, Asp435, Asp437, Tyr439, Asp444, Asp462, Asp464, Asp466, and Glu473 together coordinate Ca(2+). A Phorbol-ester/DAG-type zinc finger spans residues 494-544 (IHNFQEMTYLKPTFCEHCAGFLWGIIKQGYKCKDCGANCHKQCKDLLVLAC). Residues 667 to 690 (VDRGTEFELDQDEGEETRQDGEDG) are disordered.

Belongs to the RASGRP family.

In terms of biological role, guanine nucleotide exchange factor (GEF) for Ras and Rap1. The chain is Ras guanyl-releasing protein 3 (RASGRP3) from Homo sapiens (Human).